The primary structure comprises 519 residues: C-glycoside 3-oxidase (519 aa).

Residue Glu-41 participates in FAD binding. The tract at residues 43 to 93 is disordered; it reads GPTVSNPPGAHVKNIEDPERRSHAQRASEGPGAGAETVNSPGAVKSGERRA. Residues 55–64 show a composition bias toward basic and acidic residues; it reads KNIEDPERRS. FAD is bound by residues Ser-118, Asn-120, Met-124, Thr-129, Ala-131, and Val-234. The Proton acceptor role is filled by His-440. FAD is bound by residues Asn-474 and Thr-486.

It belongs to the GMC oxidoreductase family. Monomer. FAD serves as cofactor.

The catalysed reaction is isovitexin + O2 = 3''-dehydroisovitexin + H2O2. It catalyses the reaction isoorientin + O2 = 3''-dehydroisoorientin + H2O2. The enzyme catalyses mangiferin + O2 = 3'-dehydromangiferin + H2O2. FAD-dependent C-glycoside-metabolizing enzyme that participates in the degradation of certain C-glycosides by catalyzing the oxidation of the hydroxyl group at the C3 position of the sugar moiety. Shows oxidase activity toward various C-glycosides such as isovitexin, isoorientin and mangiferin but cannot use carminic acid, puerarin, orientin or aloesin. Shows weak activity (100 to 1000-fold lower) with O-glycosides. Probably plays a crucial role in the metabolism of C-glycosides in nature. The protein is C-glycoside 3-oxidase of Arthrobacter globiformis (strain ATCC 8010 / DSM 20124 / JCM 1332 / NBRC 12137 / NCIMB 8907 / NRRL B-2979 / 168).